A 335-amino-acid chain; its full sequence is Prepilin leader peptidase/N-methyltransferase (335 aa).

The chain crosses the membrane as a helical span at residues 13 to 33; the sequence is LFAVFLFVLGLCVGSFLNVVI. Residues Cys-49, Cys-52, Cys-74, and Cys-77 each coordinate Zn(2+). 5 helical membrane passes run 105–125, 131–151, 206–226, 258–278, and 299–319; these read WTYE…LAFI, ILPL…AFPL, LLGV…LMLL, PGLP…VQPI, and IPFG…GPWL.

Belongs to the peptidase A24 family. Requires Zn(2+) as cofactor.

It is found in the cell inner membrane. The catalysed reaction is Typically cleaves a -Gly-|-Phe- bond to release an N-terminal, basic peptide of 5-8 residues from type IV prepilin, and then N-methylates the new N-terminal amino group, the methyl donor being S-adenosyl-L-methionine.. In terms of biological role, plays an essential role in type IV pili and type II pseudopili formation by proteolytically removing the leader sequence from substrate proteins and subsequently monomethylating the alpha-amino group of the newly exposed N-terminal phenylalanine. This is Prepilin leader peptidase/N-methyltransferase (pilD) from Myxococcus xanthus (strain DK1622).